We begin with the raw amino-acid sequence, 207 residues long: Ras-related protein Rab-7a (207 aa).

Residue threonine 2 is modified to N-acetylthreonine. Residues serine 17, glycine 18, valine 19, glycine 20, lysine 21, threonine 22, serine 23, serine 34, asparagine 35, tyrosine 37, and threonine 40 each coordinate GTP. Threonine 22 contributes to the Mg(2+) binding site. A Switch 1 motif is present at residues 28–41 (YVNKKFSNQYKATI). The Mg(2+) site is built by threonine 40 and aspartate 63. Glycine 66 provides a ligand contact to GTP. A Switch 2 motif is present at residues 67-82 (QERFQSLGVAFYRGAD). Residue serine 72 is modified to Phosphoserine. GTP contacts are provided by asparagine 125, lysine 126, aspartate 128, alanine 156, and lysine 157. Glycyl lysine isopeptide (Lys-Gly) (interchain with G-Cter in ubiquitin) cross-links involve residues lysine 191 and lysine 194. S-geranylgeranyl cysteine attachment occurs at residues cysteine 205 and cysteine 207. Cysteine 207 is modified (cysteine methyl ester).

This sequence belongs to the small GTPase superfamily. Rab family. As to quaternary structure, interacts with NTRK1/TRKA. Interacts with RILP. Interacts with PSMA7. Interacts with RNF115. Interacts with FYCO1. Interacts with the PIK3C3/VPS34-PIK3R4 complex. The GTP-bound form interacts with OSBPL1A. The GTP-bound form interacts with RAC1. Interacts with CLN3. Interacts with CHM, the substrate-binding subunit of the Rab geranylgeranyltransferase complex. Interacts with C9orf72. Does not interact with HPS4 and the BLOC-3 complex (heterodimer of HPS1 and HPS4). Interacts with CLN5. Interacts with PLEKHM1 (via N- and C-terminus). Interacts with PRPH; the interaction is direct. Interacts with VPS13A. The GDP-bound form interacts with RIMOC1. Interacts with the MON1A-CCZ1B complex and this interaction is enhanced in the presence of RIMOC1. Interacts with VPS39 and VPS41. Forms a ternary complex with LAMP2 and RUFY4; the interaction with LAMP2 is mediated by RUFY4 (via RUN and coiled coil domains). Mg(2+) is required as a cofactor. In terms of processing, deubiquitination at Lys-191 and Lys-194 by USP32. Post-translationally, phosphorylated at Ser-72 by LRRK1; phosphorylation is dependent on protein kinase C (PKC) activation of LRRK1. Prenylated. Prenylation is required for association with cellular membranes.

It localises to the cytoplasmic vesicle. Its subcellular location is the phagosome membrane. It is found in the late endosome membrane. The protein resides in the lysosome membrane. The protein localises to the melanosome membrane. It localises to the autophagosome membrane. Its subcellular location is the lipid droplet. It is found in the endosome membrane. The protein resides in the mitochondrion membrane. The enzyme catalyses GTP + H2O = GDP + phosphate + H(+). Regulated by guanine nucleotide exchange factors (GEFs) which promote the exchange of bound GDP for free GTP. Regulated by GTPase activating proteins (GAPs) which increase the GTP hydrolysis activity. Inhibited by GDP dissociation inhibitors (GDIs). The small GTPases Rab are key regulators of intracellular membrane trafficking, from the formation of transport vesicles to their fusion with membranes. Rabs cycle between an inactive GDP-bound form and an active GTP-bound form that is able to recruit to membranes different sets of downstream effectors directly responsible for vesicle formation, movement, tethering and fusion. In its active state, RAB7A binds to a variety of effector proteins playing a key role in the regulation of endo-lysosomal trafficking. Governs early-to-late endosomal maturation, microtubule minus-end as well as plus-end directed endosomal migration and positioning, and endosome-lysosome transport through different protein-protein interaction cascades. Also plays a central role in growth-factor-mediated cell signaling, nutrient-transporter-mediated nutrient uptake, neurotrophin transport in the axons of neurons and lipid metabolism. Also involved in regulation of some specialized endosomal membrane trafficking, such as maturation of melanosomes, pathogen-induced phagosomes (or vacuoles) and autophagosomes. Plays a role in the maturation and acidification of phagosomes that engulf pathogens, such as S.aureus and Mycobacteria. Plays a role in the fusion of phagosomes with lysosomes. In concert with RAC1, plays a role in regulating the formation of RBs (ruffled borders) in osteoclasts. Controls the endosomal trafficking and neurite outgrowth signaling of NTRK1/TRKA. Regulates the endocytic trafficking of the EGF-EGFR complex by regulating its lysosomal degradation. Involved in the ADRB2-stimulated lipolysis through lipophagy, a cytosolic lipase-independent autophagic pathway. Required for the exosomal release of SDCBP, CD63 and syndecan. Required for vesicular trafficking and cell surface expression of ACE2. May play a role in PRPH neuronal intermediate filament assembly. The protein is Ras-related protein Rab-7a (RAB7A) of Canis lupus familiaris (Dog).